The primary structure comprises 172 residues: Ubiquitin-conjugating enzyme E2 2 (172 aa).

The 147-residue stretch at 4–150 (PARRRLMRDF…VKETVEKSWE (147 aa)) folds into the UBC core domain. Cysteine 88 (glycyl thioester intermediate) is an active-site residue. Phosphoserine; by SGV1 is present on serine 120. Residues 145 to 172 (VEKSWEDDMDDMDDDDDDDDDDDDDEAD) form a disordered region. Residues 151–172 (DDMDDMDDDDDDDDDDDDDEAD) are compositionally biased toward acidic residues.

It belongs to the ubiquitin-conjugating enzyme family. Forms a heterodimer complexes with the E3 enzymes BRE1, RAD18 and UBR1. Also interacts with UBR2, RTF1, PAF1 and the RNA polymerase II hyperphosphorylated form. The interaction with RNA polymerase II is BRE1- and PAF1-dependent. Post-translationally, the N-terminus is blocked.

The protein localises to the cytoplasm. Its subcellular location is the nucleus. It carries out the reaction S-ubiquitinyl-[E1 ubiquitin-activating enzyme]-L-cysteine + [E2 ubiquitin-conjugating enzyme]-L-cysteine = [E1 ubiquitin-activating enzyme]-L-cysteine + S-ubiquitinyl-[E2 ubiquitin-conjugating enzyme]-L-cysteine.. Its pathway is protein modification; protein ubiquitination. In terms of biological role, E2 ubiquitin-conjugating enzyme that accepts ubiquitin from the ubiquitin-activating enzyme E1 and transfers it to a E3 ubiquitin-protein ligase. In association with the E3 enzyme BRE1 and LGE1, it plays a role in transcription regulation by catalyzing the monoubiquitination of histone H2B to form H2BK123ub1. H2BK123ub1 gives a specific tag for epigenetic transcriptional activation, elongation by RNA polymerase II, telomeric silencing, and is also a prerequisite for H3K4me and H3K79me formation. In association with the E3 enzyme RAD18, it catalyzes the monoubiquitination of POL30 'Lys-164', involved in postreplication repair of UV-damaged DNA. The RAD6/UBC2-RAD18 complex is also involved in prevention of spontaneous mutations caused by 7,8-dihydro-8-oxoguanine. In association with the E3 enzyme UBR1, is involved in N-end rule-dependent protein degradation. Also involved in sporulation. This chain is Ubiquitin-conjugating enzyme E2 2 (RAD6), found in Saccharomyces cerevisiae (strain ATCC 204508 / S288c) (Baker's yeast).